The chain runs to 88 residues: Phosphocarrier protein HPr (88 aa).

An HPr domain is found at 1–88; that stretch reads MVVKTVRVLN…RLFQNKFEEE (88 aa). Residue His-15 is the Pros-phosphohistidine intermediate of the active site. The residue at position 46 (Ser-46) is a Phosphoserine; by HPrK/P.

This sequence belongs to the HPr family.

It localises to the cytoplasm. Its activity is regulated as follows. Phosphorylation on Ser-46 inhibits the phosphoryl transfer from enzyme I to HPr. Functionally, general (non sugar-specific) component of the phosphoenolpyruvate-dependent sugar phosphotransferase system (sugar PTS). This major carbohydrate active-transport system catalyzes the phosphorylation of incoming sugar substrates concomitantly with their translocation across the cell membrane. The phosphoryl group from phosphoenolpyruvate (PEP) is transferred to the phosphoryl carrier protein HPr by enzyme I. Phospho-HPr then transfers it to the PTS EIIA domain. The sequence is that of Phosphocarrier protein HPr (ptsH) from Treponema pallidum (strain Nichols).